The sequence spans 775 residues: Isopimaradiene synthase (775 aa).

A chloroplast-targeting transit peptide spans 1–36 (MFSSSLKLKTNPLMDNKIHRSSSDRDFRGSTISSVK). Mg(2+)-binding residues include aspartate 525, aspartate 529, asparagine 669, glutamine 672, and glutamate 677. Positions 525–529 (DDFFD) match the DDXXD motif motif.

The protein belongs to the terpene synthase family. Mg(2+) serves as cofactor. Ubiquitous expression in roots, stems, leaves and flowers.

The protein resides in the plastid. It localises to the chloroplast. It catalyses the reaction (+)-copalyl diphosphate = isopimara-8(14),15-diene + diphosphate. It functions in the pathway secondary metabolite biosynthesis; terpenoid biosynthesis. Its function is as follows. Involved in the biosynthesis of ent-kaurene diterpenoids natural products such as oridonin, miltiradiene, eriocalyxin B and nezukol, known to exhibit antitumor, anti-inflammatory and antibacterial activities. Catalyzes the conversion of (+)-copalyl diphosphate ((+)-CPP) to isopimaradiene. The polypeptide is Isopimaradiene synthase (Isodon rubescens (Rabdosia rubescens)).